A 344-amino-acid polypeptide reads, in one-letter code: Methionine import ATP-binding protein MetN (344 aa).

Residues 2-241 (IEINRVNKVF…PKTELARKFI (240 aa)) enclose the ABC transporter domain. 38–45 (GSSGAGKS) lines the ATP pocket.

The protein belongs to the ABC transporter superfamily. Methionine importer (TC 3.A.1.24) family. In terms of assembly, the complex is composed of two ATP-binding proteins (MetN), two transmembrane proteins (MetI) and a solute-binding protein (MetQ).

Its subcellular location is the cell inner membrane. It carries out the reaction L-methionine(out) + ATP + H2O = L-methionine(in) + ADP + phosphate + H(+). The catalysed reaction is D-methionine(out) + ATP + H2O = D-methionine(in) + ADP + phosphate + H(+). Its function is as follows. Part of the ABC transporter complex MetNIQ involved in methionine import. Responsible for energy coupling to the transport system. This is Methionine import ATP-binding protein MetN from Photobacterium profundum (strain SS9).